The sequence spans 178 residues: Ribosome rescue factor SmrB (178 aa).

In terms of domain architecture, Smr spans 99–174 (LDLHGLTQMQ…GNAALLILIE (76 aa)).

Belongs to the SmrB family. As to quaternary structure, associates with collided ribosomes, but not with correctly translating polysomes.

Its function is as follows. Acts as a ribosome collision sensor. Detects stalled/collided disomes (pairs of ribosomes where the leading ribosome is stalled and a second ribosome has collided with it) and endonucleolytically cleaves mRNA at the 5' boundary of the stalled ribosome. Stalled/collided disomes form a new interface (primarily via the 30S subunits) that binds SmrB. Cleaved mRNA becomes available for tmRNA ligation, leading to ribosomal subunit dissociation and rescue of stalled ribosomes. The sequence is that of Ribosome rescue factor SmrB from Photorhabdus laumondii subsp. laumondii (strain DSM 15139 / CIP 105565 / TT01) (Photorhabdus luminescens subsp. laumondii).